Reading from the N-terminus, the 682-residue chain is Polyadenylate-binding protein 5 (682 aa).

RRM domains are found at residues 59–136 (SSLY…LSNR), 146–223 (GNVF…HFVR), 239–316 (TNVY…RAQK), and 342–419 (SNLY…LAQR). The PABC domain maps to 588–665 (TISKLASDLA…ALDVLRRSAD (78 aa)). Phosphoserine is present on S600.

It belongs to the polyadenylate-binding protein type-1 family. As to expression, expressed predominantly in immature flowers but also at lower levels in mature flowers and siliques. Detected in tapetum, pollen, ovules and developing seeds. Also detected in primary inflorescences and immature siliques.

The protein localises to the cytoplasm. It is found in the nucleus. In terms of biological role, binds the poly(A) tail of mRNA. Appears to be an important mediator of the multiple roles of the poly(A) tail in mRNA biogenesis, stability and translation. This is Polyadenylate-binding protein 5 (PAB5) from Arabidopsis thaliana (Mouse-ear cress).